Here is a 150-residue protein sequence, read N- to C-terminus: Large ribosomal subunit protein bL9 (150 aa).

It belongs to the bacterial ribosomal protein bL9 family.

Binds to the 23S rRNA. The protein is Large ribosomal subunit protein bL9 of Serratia proteamaculans (strain 568).